The sequence spans 337 residues: MTSAPVQTDILALAREQVLERGDALNESQVLEVLQLPDDRLEELLALAHDVRMKWCGPEVEVEGIISLKTGGCPEDCHFCSQSGLFQSPVRAAWLDIPSLVEAAKQTAKSGASEFCIVAAVRGPDERLLAQVAAGIEAIRNEVDIQIACSLGMLTQEQVDQLAAMGVHRYNHNLETSKSHFPNVVTTHTWDERWNTLRMVREAGMEVCCGGILGMGESLEQRAEFAANLAELEPDEVPLNFLNPRPGTPFGDLEVLPASEALKSVAAFRLALPRTILRFAGGREITLGDLGAKQGILGGINAVIVGNYLTTLGRPAEQDLDLLVDLQMPIKALNDTL.

Positions 58-283 constitute a Radical SAM core domain; that stretch reads PEVEVEGIIS…RTILRFAGGR (226 aa). C73, C77, and C80 together coordinate [4Fe-4S] cluster. The [2Fe-2S] cluster site is built by C116, C149, C208, and R278.

The protein belongs to the radical SAM superfamily. Biotin synthase family. As to quaternary structure, homodimer. [4Fe-4S] cluster is required as a cofactor. Requires [2Fe-2S] cluster as cofactor.

The catalysed reaction is (4R,5S)-dethiobiotin + (sulfur carrier)-SH + 2 reduced [2Fe-2S]-[ferredoxin] + 2 S-adenosyl-L-methionine = (sulfur carrier)-H + biotin + 2 5'-deoxyadenosine + 2 L-methionine + 2 oxidized [2Fe-2S]-[ferredoxin]. It participates in cofactor biosynthesis; biotin biosynthesis; biotin from 7,8-diaminononanoate: step 2/2. Its function is as follows. Catalyzes the conversion of dethiobiotin (DTB) to biotin by the insertion of a sulfur atom into dethiobiotin via a radical-based mechanism. The sequence is that of Biotin synthase from Rhodococcus jostii (strain RHA1).